Reading from the N-terminus, the 576-residue chain is Adenine deaminase (576 aa).

The protein belongs to the metallo-dependent hydrolases superfamily. Adenine deaminase family. Requires Mn(2+) as cofactor.

It catalyses the reaction adenine + H2O + H(+) = hypoxanthine + NH4(+). The sequence is that of Adenine deaminase from Syntrophobacter fumaroxidans (strain DSM 10017 / MPOB).